The primary structure comprises 712 residues: Serrate RNA effector molecule homolog (712 aa).

Disordered regions lie at residues 1–80 (MVDS…DSIY), 214–256 (ADIK…TEKS), and 620–712 (QRPV…DDIP). 2 stretches are compositionally biased toward basic and acidic residues: residues 8–26 (GDRR…DYRR) and 34–54 (YDNK…SRGD). Polar residues predominate over residues 65 to 79 (RSGNGSDLPTESDSI). The segment covering 214–236 (ADIKKDENGNGTEQPKEEPEVKQ) has biased composition (basic and acidic residues). A compositionally biased stretch (acidic residues) spans 240 to 251 (ATEELEEGAIED). 2 stretches are compositionally biased toward basic and acidic residues: residues 621-637 (RPVD…DHRG) and 645-655 (GYGRERDDDRG). Residues 656 to 668 (PGGGGRNSFGGGG) are compositionally biased toward gly residues.

The protein belongs to the ARS2 family.

Its subcellular location is the nucleus. In terms of biological role, acts as a mediator between the cap-binding complex (CBC) and the primary microRNAs (miRNAs) processing machinery. Contributes to the stability and delivery of capped primary miRNA transcripts to the primary miRNA processing complex, thereby playing a role in RNA-mediated gene silencing (RNAi) by miRNAs. This Caenorhabditis elegans protein is Serrate RNA effector molecule homolog.